The sequence spans 302 residues: Paired immunoglobulin-like type 2 receptor alpha (302 aa).

Residues 1-31 form the signal peptide; that stretch reads MALLISLPGGTPAMAQILLLLSSACLHAGNS. At 32–198 the chain is on the extracellular side; the sequence is ERSNRKNGFG…GGLDLQTTVG (167 aa). 2 N-linked (GlcNAc...) asparagine glycosylation sites follow: Asn-90 and Asn-107. Residues 199-219 form a helical membrane-spanning segment; it reads LATAAAVFLVGVLGLIVFLWW. At 220–302 the chain is on the cytoplasmic side; the sequence is KRRRQGQKTK…ETVYSIVKAK (83 aa). Positions 228 to 248 are enriched in basic and acidic residues; that stretch reads TKAEIPAREPLETSEKHESVG. The segment at 228-293 is disordered; it reads TKAEIPAREP…LPVHGNPQEE (66 aa). 2 consecutive short sequence motifs (ITIM motif) follow at residues 265–270 and 294–299; these read IVYASI and TVYSIV. Positions 270–280 are enriched in polar residues; it reads ISLSSPTSPGT.

As to quaternary structure, interacts with CD99. Phosphorylated on tyrosine residues.

The protein localises to the membrane. Its function is as follows. Paired receptors consist of highly related activating and inhibitory receptors and are widely involved in the regulation of the immune system. Receptor for CD99 and PIANP. The sequence is that of Paired immunoglobulin-like type 2 receptor alpha (Pilra) from Mus musculus (Mouse).